A 335-amino-acid polypeptide reads, in one-letter code: MLLIGVAGTTLSAQEVDWLQDDAVAGVVLFKRNFASRAQIVELSAALREATPRPLLLAVDQEGGRVQRFHEGYSALPPLQGVGALYARDPEAALELAFEHAWLMASEVRASGVDLSFAPVIDLGRGNRAIGNRAFSDDPHVVAAFARAYVQGMHAAGMPVTLKHFPGHGSVLEDTHVDLAVDVRPLETLECEDLVPFAAGIAAGADAVMMAHVVYPNVAPEPAGFSAHWIEVILRGRMGFRGVVFSDDIGMAAVRGVGSVAGCVHAHLDAGCDVVLVCHPELVNDALSAVAGRRSNTAALIGLIGRGALGWDGLLADVRYGSIQSRLLERFGTST.

Residues Asp-60, Arg-68, Arg-133, and 163–164 (KH) each bind substrate. Residue His-176 is the Proton donor/acceptor of the active site. The active-site Nucleophile is the Asp-247.

The protein belongs to the glycosyl hydrolase 3 family. NagZ subfamily. In terms of assembly, monomer.

It is found in the cytoplasm. The catalysed reaction is Hydrolysis of terminal non-reducing N-acetyl-D-hexosamine residues in N-acetyl-beta-D-hexosaminides.. It functions in the pathway cell wall biogenesis; peptidoglycan recycling. Its function is as follows. Plays a role in peptidoglycan recycling by cleaving the terminal beta-1,4-linked N-acetylglucosamine (GlcNAc) from peptide-linked peptidoglycan fragments, giving rise to free GlcNAc, anhydro-N-acetylmuramic acid and anhydro-N-acetylmuramic acid-linked peptides. The chain is Beta-hexosaminidase from Xylella fastidiosa (strain 9a5c).